Here is a 602-residue protein sequence, read N- to C-terminus: MDSQPPVNESTPSTALSNFGELVPFYSSYLWNRLASLLPTSKPIFLGKISNLYRQTVSRKRSISFPLPLPSDFPSSSTITSNVSADTARIHGVLEEIMADVLSNLHDIQKSLDFWRSRAEGSNARKAYFMIFERGPTAFVNESTKFVSKSLSEDSAMQHLCQSSSSHMTERMRVLVELRSALASFIAQLYVELDKRGEDLVKIPEKALPSLLAVINGLFSNLEGSFSHLHAVRECDSSVDGSYPMPLVFDRLPEVNEEGSQWTDCELTDAINLVHKNLEKLNSYLSVMVGKHRKPRRMTLYWVRYTCGAVGLSVFSIWLLRHSSLMGSSDIENWVHDAKEATMSFFSDHVEQPLLSIRDELFDTFRKRHKGVMETEEVQLTQDSLHRMLRNFCEQATREKVPDNASDQEMLEVVMNRYEKELVHPIHNLLSGELARGLLIQVQKLKLDIETAMLELDQILRANEINFAILAALPAFFLSIVMLTVLRTWLKKDSKAQGRGRIARIHRRLLVVEIEKRIMQYQSYIEQGRDKDAETVFGLLIYSLERLYRVVEKPARATDEWDLVKQDLIELGRPQQQTSYKLTVTQRLVTVYDCLLPTLKRQ.

Transmembrane regions (helical) follow at residues 300–320 and 465–485; these read LYWV…IWLL and INFA…MLTV.

Component of a mitochondrial large protein complex that contains, at least, MIC60, DGS1, TOM40 (e.g. TOM40-1), TOM20 proteins (e.g. TOM20-2), and petC/RISP.

It localises to the mitochondrion outer membrane. In terms of biological role, involved in galactoglycerolipid biosynthesis. Contributes to an intracellular signal that regulates an alternative DGD1-independent galactoglycerolipid biosynthesis pathway in chloroplasts. Being involved in mitochondrial lipid homeostasis, modulates mitochondrion biogenesis and physiology, as well as stress responses. The protein is Protein DGS1, mitochondrial of Arabidopsis thaliana (Mouse-ear cress).